A 350-amino-acid chain; its full sequence is MAVFVVLLALVAGVLGNEFSILKSPGSVVFRNGNWPIPGERIPDVAALSMGFSVKEDLSWPGLAVGNLFHRPRATVMVMVKGVNKLALPPGSVISYPLENAVPFSLDSVANSIHSLFSEETPVVLQLAPSEERVYMVGKANSVFEDLSVTLRQLRNRLFQENSVLSSLPLNSLSRNNEVDLLFLSELQVLHDISSLLSRHKHLAKDHSPDLYSLELAGLDEIGKRYGEDSEQFRDASKILVDALQKFADDMYSLYGGNAVVELVTVKSFDTSLIRKTRTILEAKQAKNPASPYNLAYKYNFEYSVVFNMVLWIMIALALAVIITSYNIWNMDPGYDSIIYRMTNQKIRMD.

A signal peptide spans 1–16; it reads MAVFVVLLALVAGVLG. Residues 17 to 302 are Extracellular-facing; that stretch reads NEFSILKSPG…YNLAYKYNFE (286 aa). The helical transmembrane segment at 303–323 threads the bilayer; sequence YSVVFNMVLWIMIALALAVII. Topologically, residues 324-350 are cytoplasmic; sequence TSYNIWNMDPGYDSIIYRMTNQKIRMD. Positions 346–350 match the Mediates retrograde transport to the ER motif; that stretch reads KIRMD.

As to quaternary structure, interacts with renin. Accessory component of the multisubunit proton-transporting vacuolar (V)-ATPase protein pump. Interacts (via N-terminus) with ATP6AP1 (via N-terminus). Interacts with ATP6V0D1; ATP6V0D1 is a V-ATPase complex subunit and the interaction promotes V-ATPase complex assembly. Interacts with TMEM9; TMEM9 is a V-ATPase assembly regulator and the interaction induces the interaction with ATP6V0D1. Interacts with VMA21 (via N-terminus); VMA21 is a V-ATPase accessory component. Phosphorylated. Post-translationally, proteolytically cleaved by a furin-like convertase in the trans-Golgi network to generate N- and C-terminal fragments. As to expression, expressed in brain, heart, placenta, liver, kidney and pancreas. Barely detectable in lung and skeletal muscles. In the kidney cortex it is restricted to the mesangium of glomeruli. In the coronary and kidney artery it is expressed in the subendothelium, associated to smooth muscles where it colocalizes with REN. Expressed in vascular structures and by syncytiotrophoblast cells in the mature fetal placenta.

The protein resides in the endoplasmic reticulum membrane. Its subcellular location is the lysosome membrane. It is found in the cytoplasmic vesicle. The protein localises to the autophagosome membrane. It localises to the cell projection. The protein resides in the dendritic spine membrane. Its subcellular location is the axon. It is found in the endosome membrane. The protein localises to the clathrin-coated vesicle membrane. It localises to the secretory vesicle. The protein resides in the synaptic vesicle membrane. In terms of biological role, multifunctional protein which functions as a renin, prorenin cellular receptor and is involved in the assembly of the lysosomal proton-transporting V-type ATPase (V-ATPase) and the acidification of the endo-lysosomal system. May mediate renin-dependent cellular responses by activating ERK1 and ERK2. By increasing the catalytic efficiency of renin in AGT/angiotensinogen conversion to angiotensin I, may also play a role in the renin-angiotensin system (RAS). Through its function in V-type ATPase (v-ATPase) assembly and acidification of the lysosome it regulates protein degradation and may control different signaling pathways important for proper brain development, synapse morphology and synaptic transmission. This is Renin receptor from Homo sapiens (Human).